Here is a 169-residue protein sequence, read N- to C-terminus: Lipoprotein signal peptidase (169 aa).

A run of 4 helical transmembrane segments spans residues 4 to 24, 42 to 62, 70 to 90, and 102 to 122; these read PICS…IVDL, LIPF…SFLA, WFFA…MYRS, and ALII…GAVI. Active-site residues include Asp123 and Asp141. The helical transmembrane segment at 137–157 threads the bilayer; that stretch reads FNIADTAICIGAALVIFEGFI.

It belongs to the peptidase A8 family.

The protein localises to the cell inner membrane. The catalysed reaction is Release of signal peptides from bacterial membrane prolipoproteins. Hydrolyzes -Xaa-Yaa-Zaa-|-(S,diacylglyceryl)Cys-, in which Xaa is hydrophobic (preferably Leu), and Yaa (Ala or Ser) and Zaa (Gly or Ala) have small, neutral side chains.. The protein operates within protein modification; lipoprotein biosynthesis (signal peptide cleavage). This protein specifically catalyzes the removal of signal peptides from prolipoproteins. The protein is Lipoprotein signal peptidase of Yersinia enterocolitica serotype O:8 / biotype 1B (strain NCTC 13174 / 8081).